A 335-amino-acid polypeptide reads, in one-letter code: DNA polymerase beta (335 aa).

A Glycyl lysine isopeptide (Lys-Gly) (interchain with G-Cter in ubiquitin) cross-link involves residue K41. K60 is a K(+) binding site. K60 serves as a coordination point for Na(+). K61 participates in a covalent cross-link: Glycyl lysine isopeptide (Lys-Gly) (interchain with G-Cter in ubiquitin). K(+) contacts are provided by L62 and V65. Na(+) contacts are provided by L62 and V65. Residue K72 is the Nucleophile; Schiff-base intermediate with DNA; for 5'-dRP lyase activity of the active site. The residue at position 72 (K72) is an N6-acetyllysine. K81 participates in a covalent cross-link: Glycyl lysine isopeptide (Lys-Gly) (interchain with G-Cter in ubiquitin). R83 carries the post-translational modification Omega-N-methylarginine; by PRMT6. Residues T101, V103, and I106 each coordinate K(+). T101, V103, and I106 together coordinate Na(+). A 2'-deoxyribonucleoside 5'-triphosphate is bound at residue R149. The residue at position 152 (R152) is an Omega-N-methylarginine; by PRMT6. Positions 180, 183, 189, and 190 each coordinate a 2'-deoxyribonucleoside 5'-triphosphate. The segment at 183–192 (RGAESSGDMD) is DNA-binding. Mg(2+) contacts are provided by D190, D192, and D256.

The protein belongs to the DNA polymerase type-X family. In terms of assembly, monomer. Binds single-stranded DNA (ssDNA). Interacts with APEX1, LIG1, LIG3, FEN1, PCNA and XRCC1. Interacts with HUWE1/ARF-BP1, STUB1/CHIP and USP47. Interacts with FAM168A. The cofactor is Mg(2+). Post-translationally, methylation by PRMT6 stimulates the polymerase activity by enhancing DNA binding and processivity. In terms of processing, ubiquitinated at Lys-41, Lys-61 and Lys-81: monoubiquitinated by HUWE1/ARF-BP1. Monoubiquitinated protein is then the target of STUB1/CHIP, which catalyzes polyubiquitination from monoubiquitin, leading to degradation by the proteasome. USP47 mediates the deubiquitination of monoubiquitinated protein, preventing polyubiquitination by STUB1/CHIP and its subsequent degradation.

It is found in the nucleus. The protein localises to the cytoplasm. It carries out the reaction DNA(n) + a 2'-deoxyribonucleoside 5'-triphosphate = DNA(n+1) + diphosphate. The catalysed reaction is a 5'-end 2'-deoxyribose-2'-deoxyribonucleotide-DNA = (2E,4S)-4-hydroxypenten-2-al-5-phosphate + a 5'-end 5'-phospho-2'-deoxyribonucleoside-DNA + H(+). It catalyses the reaction 2'-deoxyribonucleotide-(2'-deoxyribose 5'-phosphate)-2'-deoxyribonucleotide-DNA = a 3'-end 2'-deoxyribonucleotide-(2,3-dehydro-2,3-deoxyribose 5'-phosphate)-DNA + a 5'-end 5'-phospho-2'-deoxyribonucleoside-DNA + H(+). Repair polymerase that plays a key role in base-excision repair. During this process, the damaged base is excised by specific DNA glycosylases, the DNA backbone is nicked at the abasic site by an apurinic/apyrimidic (AP) endonuclease, and POLB removes 5'-deoxyribose-phosphate from the preincised AP site acting as a 5'-deoxyribose-phosphate lyase (5'-dRP lyase); through its DNA polymerase activity, it adds one nucleotide to the 3' end of the arising single-nucleotide gap. Conducts 'gap-filling' DNA synthesis in a stepwise distributive fashion rather than in a processive fashion as for other DNA polymerases. It is also able to cleave sugar-phosphate bonds 3' to an intact AP site, acting as an AP lyase. The protein is DNA polymerase beta (Polb) of Mus musculus (Mouse).